We begin with the raw amino-acid sequence, 598 residues long: DNA mismatch repair protein MutL (598 aa).

Belongs to the DNA mismatch repair MutL/HexB family.

Its function is as follows. This protein is involved in the repair of mismatches in DNA. It is required for dam-dependent methyl-directed DNA mismatch repair. May act as a 'molecular matchmaker', a protein that promotes the formation of a stable complex between two or more DNA-binding proteins in an ATP-dependent manner without itself being part of a final effector complex. The sequence is that of DNA mismatch repair protein MutL from Geotalea daltonii (strain DSM 22248 / JCM 15807 / FRC-32) (Geobacter daltonii).